We begin with the raw amino-acid sequence, 322 residues long: Putative A-type inclusion protein (322 aa).

Residues 284-322 are disordered; the sequence is LTTEATGSVEVAPPSTDVTEPISDVTPSVDVEPEHPPAF.

It belongs to the chordopoxvirinae A26 protein family.

In terms of biological role, encodes a truncated version of poxvirus A26 protein. This is Putative A-type inclusion protein from Vaccinia virus (strain Copenhagen) (VACV).